The sequence spans 176 residues: Large ribosomal subunit protein uL10 (176 aa).

The protein belongs to the universal ribosomal protein uL10 family. Part of the ribosomal stalk of the 50S ribosomal subunit. The N-terminus interacts with L11 and the large rRNA to form the base of the stalk. The C-terminus forms an elongated spine to which L12 dimers bind in a sequential fashion forming a multimeric L10(L12)X complex.

Functionally, forms part of the ribosomal stalk, playing a central role in the interaction of the ribosome with GTP-bound translation factors. This chain is Large ribosomal subunit protein uL10, found in Mycobacteroides abscessus (strain ATCC 19977 / DSM 44196 / CCUG 20993 / CIP 104536 / JCM 13569 / NCTC 13031 / TMC 1543 / L948) (Mycobacterium abscessus).